A 174-amino-acid chain; its full sequence is Co-chaperone protein HscB (174 aa).

In terms of domain architecture, J spans Asp2–Leu74.

Belongs to the HscB family. As to quaternary structure, interacts with HscA and stimulates its ATPase activity. Interacts with IscU.

In terms of biological role, co-chaperone involved in the maturation of iron-sulfur cluster-containing proteins. Seems to help targeting proteins to be folded toward HscA. In Yersinia pseudotuberculosis serotype O:1b (strain IP 31758), this protein is Co-chaperone protein HscB.